Reading from the N-terminus, the 325-residue chain is Elongation factor P--(R)-beta-lysine ligase (325 aa).

Residue 76 to 78 participates in substrate binding; sequence SPE. ATP-binding positions include 100-102 and Asn109; that span reads RNE. Position 118 (Tyr118) interacts with substrate. 244 to 245 provides a ligand contact to ATP; that stretch reads EL. Substrate is bound at residue Glu251. Gly300 is an ATP binding site.

Belongs to the class-II aminoacyl-tRNA synthetase family. EpmA subfamily. In terms of assembly, homodimer.

The catalysed reaction is D-beta-lysine + L-lysyl-[protein] + ATP = N(6)-((3R)-3,6-diaminohexanoyl)-L-lysyl-[protein] + AMP + diphosphate + H(+). In terms of biological role, with EpmB is involved in the beta-lysylation step of the post-translational modification of translation elongation factor P (EF-P) on 'Lys-34'. Catalyzes the ATP-dependent activation of (R)-beta-lysine produced by EpmB, forming a lysyl-adenylate, from which the beta-lysyl moiety is then transferred to the epsilon-amino group of EF-P 'Lys-34'. The sequence is that of Elongation factor P--(R)-beta-lysine ligase from Escherichia fergusonii (strain ATCC 35469 / DSM 13698 / CCUG 18766 / IAM 14443 / JCM 21226 / LMG 7866 / NBRC 102419 / NCTC 12128 / CDC 0568-73).